The primary structure comprises 413 residues: CinA-like protein (413 aa).

The protein belongs to the CinA family.

This is CinA-like protein from Desulfosudis oleivorans (strain DSM 6200 / JCM 39069 / Hxd3) (Desulfococcus oleovorans).